The chain runs to 341 residues: tRNA N6-adenosine threonylcarbamoyltransferase (341 aa).

Fe cation is bound by residues His-119 and His-123. Substrate-binding positions include 141–145 (MVSGG), Asp-174, Gly-187, and Asn-279. Position 307 (Asp-307) interacts with Fe cation.

It belongs to the KAE1 / TsaD family. Fe(2+) serves as cofactor.

It localises to the cytoplasm. The catalysed reaction is L-threonylcarbamoyladenylate + adenosine(37) in tRNA = N(6)-L-threonylcarbamoyladenosine(37) in tRNA + AMP + H(+). In terms of biological role, required for the formation of a threonylcarbamoyl group on adenosine at position 37 (t(6)A37) in tRNAs that read codons beginning with adenine. Is involved in the transfer of the threonylcarbamoyl moiety of threonylcarbamoyl-AMP (TC-AMP) to the N6 group of A37, together with TsaE and TsaB. TsaD likely plays a direct catalytic role in this reaction. This Oenococcus oeni (strain ATCC BAA-331 / PSU-1) protein is tRNA N6-adenosine threonylcarbamoyltransferase.